Here is a 185-residue protein sequence, read N- to C-terminus: Ribosome-recycling factor (185 aa).

It belongs to the RRF family.

The protein resides in the cytoplasm. Functionally, responsible for the release of ribosomes from messenger RNA at the termination of protein biosynthesis. May increase the efficiency of translation by recycling ribosomes from one round of translation to another. This chain is Ribosome-recycling factor, found in Sulfurovum sp. (strain NBC37-1).